We begin with the raw amino-acid sequence, 2187 residues long: Non-reducing polyketide synthase phnA (2187 aa).

The N-terminal acylcarrier protein transacylase domain (SAT) stretch occupies residues 17 to 255; it reads LLFGDLSLAH…KYLDIDSPYH (239 aa). The region spanning 383–819 is the Ketosynthase family 3 (KS3) domain; the sequence is HSKIAIVGYS…GGNTAMLIED (437 aa). Catalysis depends on for beta-ketoacyl synthase activity residues Cys555, His690, and His735. The segment at 926–1226 is malonyl-CoA:ACP transacylase (MAT) domain; that stretch reads RVAFAFTGQG…GMVKGTIDSR (301 aa). The active-site For acyl/malonyl transferase activity is Ser1021. Residues 1321–1637 form a product template (PT) domain region; that stretch reads PCAQQIVEEF…PRRALDHLLP (317 aa). An N-terminal hotdog fold region spans residues 1324-1458; the sequence is QQIVEEFHDS…LDVVLYPGQQ (135 aa). The 310-residue stretch at 1324-1633 folds into the PKS/mFAS DH domain; that stretch reads QQIVEEFHDS…FQGVPRRALD (310 aa). His1356 (proton acceptor; for dehydratase activity) is an active-site residue. Residues 1486 to 1633 form a C-terminal hotdog fold region; that stretch reads TETHLIKRGM…FQGVPRRALD (148 aa). The Proton donor; for dehydratase activity role is filled by Asp1546. The span at 1652 to 1669 shows a compositional bias: low complexity; the sequence is KAPVAAVAPPRTPTKAAP. Positions 1652–1681 are disordered; sequence KAPVAAVAPPRTPTKAAPQSRQAAPKQKRS. 2 consecutive Carrier domains span residues 1684-1758 and 1796-1874; these read SDVF…SNSD and SSES…YNVM. Ser1718 carries the post-translational modification O-(pantetheine 4'-phosphoryl)serine. A disordered region spans residues 1754-1796; the sequence is LSNSDEDDTPSGDSSTYEDSESQITSPASSVGPETPGGGEFGS. Acidic residues predominate over residues 1757-1774; sequence SDEDDTPSGDSSTYEDSE. An O-(pantetheine 4'-phosphoryl)serine modification is found at Ser1834. Positions 1906–2183 are thioesterase (TE) domain; the sequence is SSLPQATSIL…PEMGEAVAEF (278 aa). Residue Ser2009 is the For thioesterase activity of the active site.

The enzyme catalyses 6 malonyl-CoA + acetyl-CoA + 5 H(+) = 3,6,7,9-tetrahydroxy-3-methyl-2,3-dihydro-1H-naphtho[2,1-b]pyran-1-one + 6 CO2 + 7 CoA + H2O. It functions in the pathway secondary metabolite biosynthesis. In terms of biological role, non-reducing polyketide synthase; part of the gene cluster that mediates the biosynthesis of phenalenones such as herqueinone, compounds that have been reported to treat tumors, bacterial infections and/or mycoses, and rheumatic diseases. The non-reducing polyketide synthase phnA synthesizes the heptaketide backbone and cyclizes it into the angular, hemiketal-containing naphtho-gamma-pyrone prephenalenone. The product template (PT) domain of phnA catalyzes only the C4-C9 aldol condensation, which is unprecedented among known PT domains. The transformation of prephenalenone to phenalenones requires an FAD-dependent monooxygenase phnB, which catalyzes the C2 aromatic hydroxylation of prephenalenone and ring opening of the gamma-pyrone ring simultaneously. Subsequent intramolecular deprotonation of C3 phenolic oxygen accelerates phenalenone ring closure to yield the tricyclic phenalenone core with a C2 hydroxylation. The prenyltransferase phnF further catalyzes reverse C-prenylation of phenalenone by direct electrophilic substitution at C6, or possibly via first a forward O-prenylation of a neighboring phenol in phenalenone, followed by a Claisen rearrangement. The hydroalkoxylation enzyme phnH catalyzes the 5-exo-trig cyclization via acid catalysis after the spontaneous deprotonation of 7-OH, which leads to the formation of the dihydrobenzofuran atrovenetin. Atrovenetin is further converted to deoxyherqueinone by the O-methyltransferase phnC which can methylate C2-OH to stabilize the northern portion of the phenalenone core. Finally, the oxidoreductase phnG converts deoxyherqueinone to herqueinone via C6 hydroxylation. The sequence is that of Non-reducing polyketide synthase phnA from Penicillium herquei.